The primary structure comprises 429 residues: Nocturnin (429 aa).

A mitochondrion-targeting transit peptide spans 1–73 (MYQSPRRLCS…SMGNGTSRLY (73 aa)). The segment at 21–68 (RRTLVPGPRRTLAPPVLGSRPKSPQLQAAAASGAARSRPRTVSSMGNG) is disordered. Residue Glu-193 participates in Mg(2+) binding. Residues Glu-193, 217–219 (KPW), Asn-261, 284–287 (HLKA), and 322–324 (DFN) each bind substrate. Residues 341–351 (NLNSAYKLLSP) are interaction with PPARG. His-412 lines the substrate pocket.

The protein belongs to the CCR4/nocturin family. As to quaternary structure, interacts with PPARG. Mg(2+) is required as a cofactor. As to expression, highly expressed in the differentiated adipocyte (at protein level). Ubiquitous.

The protein localises to the cytoplasm. Its subcellular location is the nucleus. The protein resides in the perinuclear region. It is found in the mitochondrion. It catalyses the reaction NADP(+) + H2O = phosphate + NAD(+). It carries out the reaction NADPH + H2O = phosphate + NADH. Phosphatase which catalyzes the conversion of NADP(+) to NAD(+) and of NADPH to NADH. Shows a small preference for NADPH over NADP(+). Represses translation and promotes degradation of target mRNA molecules. Plays an important role in post-transcriptional regulation of metabolic genes under circadian control. Exerts a rhythmic post-transcriptional control of genes necessary for metabolic functions including nutrient absorption, glucose/insulin sensitivity, lipid metabolism, adipogenesis, inflammation and osteogenesis. Plays an important role in favoring adipogenesis over osteoblastogenesis and acts as a key regulator of the adipogenesis/osteogenesis balance. Promotes adipogenesis by facilitating PPARG nuclear translocation which activates its transcriptional activity. Regulates circadian expression of NOS2 in the liver and negatively regulates the circadian expression of IGF1 in the bone. Critical for proper development of early embryos. The sequence is that of Nocturnin from Mus musculus (Mouse).